A 131-amino-acid polypeptide reads, in one-letter code: UPF0102 protein YraN (131 aa).

A compositionally biased stretch (polar residues) spans Met-1 to Thr-19. The segment at Met-1 to Gly-20 is disordered.

This sequence belongs to the UPF0102 family.

The protein is UPF0102 protein YraN of Escherichia coli O157:H7.